A 44-amino-acid chain; its full sequence is Unknown protein 1 (44 aa).

This chain is Unknown protein 1, found in Lonomia obliqua (Moth).